The sequence spans 608 residues: Phosphoenolpyruvate carboxykinase [GTP] (608 aa).

Substrate-binding positions include Arg82 and 222 to 224 (YGG). Positions 231 and 251 each coordinate Mn(2+). Ser273 serves as a coordination point for substrate. GTP is bound at residue 274-279 (ACGKTN). Cys275 is a catalytic residue. Asp298 is a binding site for Mn(2+). 389–391 (NSR) contributes to the substrate binding site. GTP-binding positions include Arg391, Arg422, and 517–520 (FGDN).

The protein belongs to the phosphoenolpyruvate carboxykinase [GTP] family. As to quaternary structure, monomer. Mn(2+) serves as cofactor.

Its subcellular location is the cytoplasm. It carries out the reaction oxaloacetate + GTP = phosphoenolpyruvate + GDP + CO2. It functions in the pathway carbohydrate biosynthesis; gluconeogenesis. Catalyzes the conversion of oxaloacetate (OAA) to phosphoenolpyruvate (PEP), the rate-limiting step in the metabolic pathway that produces glucose from lactate and other precursors derived from the citric acid cycle. The protein is Phosphoenolpyruvate carboxykinase [GTP] of Paenarthrobacter aurescens (strain TC1).